The chain runs to 112 residues: MNFDMSKLMQQAQKMQEQMKKAQQERENMEVIGESGAGLVTVTMTGKYDVKSVSIDNSLMSEDKEILEDLIAAAVNNAVKKVEENSTASSDIYKMAKDAGIDLPSGINFPFK.

Positions 1–27 (MNFDMSKLMQQAQKMQEQMKKAQQERE) are disordered. Residues 17-27 (EQMKKAQQERE) show a composition bias toward basic and acidic residues.

It belongs to the YbaB/EbfC family. As to quaternary structure, homodimer.

The protein resides in the cytoplasm. Its subcellular location is the nucleoid. Its function is as follows. Binds to DNA and alters its conformation. May be involved in regulation of gene expression, nucleoid organization and DNA protection. The protein is Nucleoid-associated protein FTW_0607 of Francisella tularensis subsp. tularensis (strain WY96-3418).